The chain runs to 249 residues: Proteasome activator complex subunit 1 (249 aa).

The interval 60–102 (PLDIPVPDPVKEKEKEERKKQQEKEDKDEKKKGEDEDKGPPCG) is disordered. Residues 68 to 98 (PVKEKEKEERKKQQEKEDKDEKKKGEDEDKG) are compositionally biased toward basic and acidic residues.

This sequence belongs to the PA28 family. In terms of assembly, heterodimer of PSME1 and PSME2, which forms a hexameric ring. PSME1 can form homoheptamers.

In terms of biological role, implicated in immunoproteasome assembly and required for efficient antigen processing. The PA28 activator complex enhances the generation of class I binding peptides by altering the cleavage pattern of the proteasome. The polypeptide is Proteasome activator complex subunit 1 (PSME1) (Sus scrofa (Pig)).